A 178-amino-acid chain; its full sequence is Large ribosomal subunit protein uL6 (178 aa).

This sequence belongs to the universal ribosomal protein uL6 family. Part of the 50S ribosomal subunit.

In terms of biological role, this protein binds to the 23S rRNA, and is important in its secondary structure. It is located near the subunit interface in the base of the L7/L12 stalk, and near the tRNA binding site of the peptidyltransferase center. The polypeptide is Large ribosomal subunit protein uL6 (Streptococcus suis (strain 05ZYH33)).